The primary structure comprises 95 residues: Beta-defensin 132 (95 aa).

Residues 1-22 (MKFLLLVLAALGFLTQVIPASA) form the signal peptide. 3 cysteine pairs are disulfide-bonded: cysteine 27–cysteine 55, cysteine 35–cysteine 49, and cysteine 39–cysteine 56. The interval 74 to 95 (HWQSRRRNTQRKDKKQQTTVTS) is disordered. Basic residues predominate over residues 76-87 (QSRRRNTQRKDK).

This sequence belongs to the beta-defensin family.

The protein localises to the secreted. Its function is as follows. Has antibacterial activity. This Homo sapiens (Human) protein is Beta-defensin 132 (DEFB132).